Here is a 66-residue protein sequence, read N- to C-terminus: Large ribosomal subunit protein uL29 (66 aa).

Belongs to the universal ribosomal protein uL29 family.

The sequence is that of Large ribosomal subunit protein uL29 from Helicobacter pylori (strain P12).